The primary structure comprises 376 residues: Dual-specificity RNA methyltransferase RlmN (376 aa).

The active-site Proton acceptor is glutamate 96. The Radical SAM core domain occupies 102–341; that stretch reads DEDRATLCVS…VVVRKTRGDD (240 aa). Cysteine 109 and cysteine 346 are joined by a disulfide. 3 residues coordinate [4Fe-4S] cluster: cysteine 116, cysteine 120, and cysteine 123. Residues 170–171, serine 202, 224–226, and asparagine 303 contribute to the S-adenosyl-L-methionine site; these read GE and SLH. The active-site S-methylcysteine intermediate is the cysteine 346.

Belongs to the radical SAM superfamily. RlmN family. [4Fe-4S] cluster is required as a cofactor.

It localises to the cytoplasm. It catalyses the reaction adenosine(2503) in 23S rRNA + 2 reduced [2Fe-2S]-[ferredoxin] + 2 S-adenosyl-L-methionine = 2-methyladenosine(2503) in 23S rRNA + 5'-deoxyadenosine + L-methionine + 2 oxidized [2Fe-2S]-[ferredoxin] + S-adenosyl-L-homocysteine. It carries out the reaction adenosine(37) in tRNA + 2 reduced [2Fe-2S]-[ferredoxin] + 2 S-adenosyl-L-methionine = 2-methyladenosine(37) in tRNA + 5'-deoxyadenosine + L-methionine + 2 oxidized [2Fe-2S]-[ferredoxin] + S-adenosyl-L-homocysteine. Functionally, specifically methylates position 2 of adenine 2503 in 23S rRNA and position 2 of adenine 37 in tRNAs. m2A2503 modification seems to play a crucial role in the proofreading step occurring at the peptidyl transferase center and thus would serve to optimize ribosomal fidelity. The polypeptide is Dual-specificity RNA methyltransferase RlmN (Pseudoalteromonas atlantica (strain T6c / ATCC BAA-1087)).